We begin with the raw amino-acid sequence, 92 residues long: C-C motif chemokine 3 (92 aa).

Positions methionine 1 to serine 19 are cleaved as a signal peptide. Disulfide bonds link cysteine 33/cysteine 57 and cysteine 34/cysteine 73.

Belongs to the intercrine beta (chemokine CC) family. Self-associates. Also heterodimer of MIP-1-alpha(4-69) and MIP-1-beta(3-69). Interacts with CCR1.

The protein resides in the secreted. Monokine with inflammatory and chemokinetic properties. Binds to CCR1, CCR4 and CCR5. One of the major HIV-suppressive factors produced by CD8+ T-cells. Recombinant MIP-1-alpha induces a dose-dependent inhibition of different strains of HIV-1, HIV-2, and simian immunodeficiency virus (SIV). The polypeptide is C-C motif chemokine 3 (CCL3) (Canis lupus familiaris (Dog)).